The sequence spans 557 residues: Potassium-transporting ATPase potassium-binding subunit (557 aa).

12 helical membrane-spanning segments follow: residues 5-25 (GFLL…PLGS), 63-83 (LSAI…MLLG), 132-152 (GLTV…FALI), 170-190 (LLRI…LFFI), 253-273 (FVQM…FGEV), 283-303 (LLWA…WAEV), 329-349 (VLVS…AVIA), 356-376 (ALGG…FGGV), 379-399 (GLYG…LMIG), 416-436 (LTAL…ALAM), 484-504 (LLAL…MAIA), and 526-546 (LFVG…FIPA).

The protein belongs to the KdpA family. As to quaternary structure, the system is composed of three essential subunits: KdpA, KdpB and KdpC.

It localises to the cell inner membrane. In terms of biological role, part of the high-affinity ATP-driven potassium transport (or Kdp) system, which catalyzes the hydrolysis of ATP coupled with the electrogenic transport of potassium into the cytoplasm. This subunit binds the periplasmic potassium ions and delivers the ions to the membrane domain of KdpB through an intramembrane tunnel. This Escherichia coli O6:K15:H31 (strain 536 / UPEC) protein is Potassium-transporting ATPase potassium-binding subunit.